The sequence spans 1059 residues: WD repeat-containing protein on Y chromosome (1059 aa).

WD repeat units follow at residues 121–161, 170–209, 214–256, 344–383, 387–426, 476–515, 528–567, 616–658, 714–759, 766–805, and 849–888; these read DFCP…ALTA, RSKT…FTLK, RLPQ…KVTT, CVPR…KPSV, GHTS…LLQT, SHTK…KMTI, LEPV…CMRT, QHSD…RRYD, MRQL…GFKG, MAGD…IPNE, and AHRA…IGLL.

The protein is WD repeat-containing protein on Y chromosome of Anopheles gambiae (African malaria mosquito).